The following is a 77-amino-acid chain: uncharacterized protein (77 aa).

This is an uncharacterized protein from Saccharomyces cerevisiae (strain ATCC 204508 / S288c) (Baker's yeast).